The chain runs to 305 residues: Probable GTP 3',8-cyclase (305 aa).

A Radical SAM core domain is found at 6–228; the sequence is NHRRPLVSLR…MTRKFMQDRK (223 aa). R15 contacts GTP. [4Fe-4S] cluster is bound by residues C22 and C26. Y28 contacts S-adenosyl-L-methionine. C29 serves as a coordination point for [4Fe-4S] cluster. R62 lines the GTP pocket. G66 contacts S-adenosyl-L-methionine. T92 serves as a coordination point for GTP. An S-adenosyl-L-methionine-binding site is contributed by S116. Residue K153 participates in GTP binding. 2 residues coordinate [4Fe-4S] cluster: C249 and C252. Residue 254–256 participates in GTP binding; it reads RLR. Position 266 (C266) interacts with [4Fe-4S] cluster.

It belongs to the radical SAM superfamily. MoaA family. [4Fe-4S] cluster is required as a cofactor.

It carries out the reaction GTP + AH2 + S-adenosyl-L-methionine = (8S)-3',8-cyclo-7,8-dihydroguanosine 5'-triphosphate + 5'-deoxyadenosine + L-methionine + A + H(+). It participates in cofactor biosynthesis; molybdopterin biosynthesis. Catalyzes the cyclization of GTP to (8S)-3',8-cyclo-7,8-dihydroguanosine 5'-triphosphate. The chain is Probable GTP 3',8-cyclase from Methanothermobacter marburgensis (strain ATCC BAA-927 / DSM 2133 / JCM 14651 / NBRC 100331 / OCM 82 / Marburg) (Methanobacterium thermoautotrophicum).